We begin with the raw amino-acid sequence, 225 residues long: 7-cyano-7-deazaguanine synthase (225 aa).

L10–A20 contacts ATP. Zn(2+) is bound by residues C191, C199, C202, and C205.

The protein belongs to the QueC family. Zn(2+) serves as cofactor.

It catalyses the reaction 7-carboxy-7-deazaguanine + NH4(+) + ATP = 7-cyano-7-deazaguanine + ADP + phosphate + H2O + H(+). Its pathway is purine metabolism; 7-cyano-7-deazaguanine biosynthesis. Functionally, catalyzes the ATP-dependent conversion of 7-carboxy-7-deazaguanine (CDG) to 7-cyano-7-deazaguanine (preQ(0)). In Prochlorococcus marinus (strain NATL2A), this protein is 7-cyano-7-deazaguanine synthase.